The chain runs to 689 residues: Protein-glutamine gamma-glutamyltransferase 2 (689 aa).

Catalysis depends on residues Cys-278, His-336, and Asp-359. Asn-399, Asp-401, Glu-437, Glu-447, and Glu-452 together coordinate Ca(2+). The segment at 427–453 (STKSVGRDSREDITHTYKYPEGSEKER) is disordered. Basic and acidic residues predominate over residues 431-441 (VGRDSREDITH). 476-483 (RIKLSEGA) is a binding site for GTP. Position 539 (Glu-539) interacts with Ca(2+). 580–583 (RDVY) lines the GTP pocket.

This sequence belongs to the transglutaminase superfamily. Transglutaminase family. Monomer. The cofactor is Ca(2+). Predominates in mature erythrocytes. Also found in kidney and cardiac muscle.

The protein resides in the cytoplasm. The protein localises to the cytosol. Its subcellular location is the nucleus. It localises to the chromosome. It is found in the secreted. The protein resides in the extracellular space. The protein localises to the extracellular matrix. Its subcellular location is the cell membrane. It localises to the mitochondrion. The catalysed reaction is L-glutaminyl-[protein] + L-lysyl-[protein] = [protein]-L-lysyl-N(6)-5-L-glutamyl-[protein] + NH4(+). The enzyme catalyses L-glutaminyl-[protein] + serotonin = 5-serotonyl-L-glutamyl-[protein] + NH4(+). It carries out the reaction L-glutaminyl-[protein] + dopamine = 5-dopaminyl-L-glutamyl-[protein] + NH4(+). It catalyses the reaction L-glutaminyl-[protein] + histamine = 5-histaminyl-L-glutamyl-[protein] + NH4(+). The catalysed reaction is L-glutaminyl-[protein] + (R)-noradrenaline = 5-(R)-noradrenalinyl-L-glutamyl-[protein] + NH4(+). The enzyme catalyses L-glutaminyl-[protein] + H2O = L-glutamyl-[protein] + NH4(+). Acyltransferase activity is regulated by the binding of GTP and Ca(2+): inactivated by GTP, which stabilizes its closed structure, thereby obstructing the accessibility of substrates to the active sites. In contrast, Ca(2+) acts as a cofactor by inducing conformational change to the active open form. In absence of Ca(2+), Mg(2+) may bind Ca(2+)-binding sites, promoting GTP-binding and subsequent inhibition of the acyltransferase activity. Its function is as follows. Calcium-dependent acyltransferase that catalyzes the formation of covalent bonds between peptide-bound glutamine and various primary amines, such as gamma-amino group of peptide-bound lysine, or mono- and polyamines, thereby producing cross-linked or aminated proteins, respectively. Involved in many biological processes, such as bone development, angiogenesis, wound healing, cellular differentiation, chromatin modification and apoptosis. Acts as a protein-glutamine gamma-glutamyltransferase by mediating the cross-linking of proteins: under physiological conditions, the protein cross-linking activity is inhibited by GTP; inhibition is relieved by Ca(2+) in response to various stresses. When secreted, catalyzes cross-linking of proteins of the extracellular matrix, resulting in the formation of scaffolds. Plays a key role during apoptosis, both by (1) promoting the cross-linking of cytoskeletal proteins resulting in condensation of the cytoplasm, and by (2) mediating cross-linking proteins of the extracellular matrix, resulting in the irreversible formation of scaffolds that stabilize the integrity of the dying cells before their clearance by phagocytosis, thereby preventing the leakage of harmful intracellular components. In addition to protein cross-linking, can use different monoamine substrates to catalyze a vast array of protein post-translational modifications: mediates aminylation of serotonin, dopamine, noradrenaline or histamine into glutamine residues of target proteins to generate protein serotonylation, dopaminylation, noradrenalinylation or histaminylation, respectively. Mediates protein serotonylation of small GTPases during activation and aggregation of platelets, leading to constitutive activation of these GTPases. Plays a key role in chromatin organization by mediating serotonylation and dopaminylation of histone H3. Catalyzes serotonylation of 'Gln-5' of histone H3 (H3Q5ser) during serotonergic neuron differentiation, thereby facilitating transcription. Acts as a mediator of neurotransmission-independent role of nuclear dopamine in ventral tegmental area (VTA) neurons: catalyzes dopaminylation of 'Gln-5' of histone H3 (H3Q5dop), thereby regulating relapse-related transcriptional plasticity in the reward system. Also acts as a protein deamidase by mediating the side chain deamidation of specific glutamine residues of proteins to glutamate. May also act as an isopeptidase cleaving the previously formed cross-links. Also able to participate in signaling pathways independently of its acyltransferase activity: acts as a signal transducer in alpha-1 adrenergic receptor-mediated stimulation of phospholipase C-delta (PLCD) activity and is required for coupling alpha-1 adrenergic agonists to the stimulation of phosphoinositide lipid metabolism. This Gallus gallus (Chicken) protein is Protein-glutamine gamma-glutamyltransferase 2.